Consider the following 422-residue polypeptide: Histidine--tRNA ligase (422 aa).

It belongs to the class-II aminoacyl-tRNA synthetase family. As to quaternary structure, homodimer.

It is found in the cytoplasm. It carries out the reaction tRNA(His) + L-histidine + ATP = L-histidyl-tRNA(His) + AMP + diphosphate + H(+). The polypeptide is Histidine--tRNA ligase (Prosthecochloris aestuarii (strain DSM 271 / SK 413)).